Here is a 405-residue protein sequence, read N- to C-terminus: Arginine biosynthesis bifunctional protein ArgJ (405 aa).

Residues Thr-155, Lys-181, Thr-192, Glu-278, Asn-400, and Thr-405 each coordinate substrate. The active-site Nucleophile is Thr-192.

It belongs to the ArgJ family. As to quaternary structure, heterotetramer of two alpha and two beta chains.

It localises to the cytoplasm. It catalyses the reaction N(2)-acetyl-L-ornithine + L-glutamate = N-acetyl-L-glutamate + L-ornithine. The catalysed reaction is L-glutamate + acetyl-CoA = N-acetyl-L-glutamate + CoA + H(+). The protein operates within amino-acid biosynthesis; L-arginine biosynthesis; L-ornithine and N-acetyl-L-glutamate from L-glutamate and N(2)-acetyl-L-ornithine (cyclic): step 1/1. It participates in amino-acid biosynthesis; L-arginine biosynthesis; N(2)-acetyl-L-ornithine from L-glutamate: step 1/4. Functionally, catalyzes two activities which are involved in the cyclic version of arginine biosynthesis: the synthesis of N-acetylglutamate from glutamate and acetyl-CoA as the acetyl donor, and of ornithine by transacetylation between N(2)-acetylornithine and glutamate. The chain is Arginine biosynthesis bifunctional protein ArgJ from Dehalococcoides mccartyi (strain CBDB1).